The primary structure comprises 763 residues: Xaa-Pro dipeptidyl-peptidase (763 aa).

Active-site charge relay system residues include serine 348, aspartate 468, and histidine 498.

Belongs to the peptidase S15 family. As to quaternary structure, homodimer.

Its subcellular location is the cytoplasm. The catalysed reaction is Hydrolyzes Xaa-Pro-|- bonds to release unblocked, N-terminal dipeptides from substrates including Ala-Pro-|-p-nitroanilide and (sequentially) Tyr-Pro-|-Phe-Pro-|-Gly-Pro-|-Ile.. In terms of biological role, removes N-terminal dipeptides sequentially from polypeptides having unsubstituted N-termini provided that the penultimate residue is proline. This Lactococcus lactis subsp. lactis (strain IL1403) (Streptococcus lactis) protein is Xaa-Pro dipeptidyl-peptidase (pepX).